The chain runs to 453 residues: tRNA modification GTPase MnmE (453 aa).

(6S)-5-formyl-5,6,7,8-tetrahydrofolate contacts are provided by Arg22, Glu79, and Lys119. The TrmE-type G domain maps to 215 to 376 (GMKVVIAGRP…LKQHLKSLMG (162 aa)). Asn225 serves as a coordination point for K(+). Residues 225–230 (NAGKSS), 244–250 (TEIAGTT), 269–272 (DTAG), and 334–337 (NKAD) each bind GTP. Ser229 provides a ligand contact to Mg(2+). K(+) is bound by residues Thr244, Ile246, and Thr249. Thr250 provides a ligand contact to Mg(2+). (6S)-5-formyl-5,6,7,8-tetrahydrofolate is bound at residue Lys453.

This sequence belongs to the TRAFAC class TrmE-Era-EngA-EngB-Septin-like GTPase superfamily. TrmE GTPase family. As to quaternary structure, homodimer. Heterotetramer of two MnmE and two MnmG subunits. K(+) is required as a cofactor.

The protein resides in the cytoplasm. In terms of biological role, exhibits a very high intrinsic GTPase hydrolysis rate. Involved in the addition of a carboxymethylaminomethyl (cmnm) group at the wobble position (U34) of certain tRNAs, forming tRNA-cmnm(5)s(2)U34. This Shewanella baltica (strain OS155 / ATCC BAA-1091) protein is tRNA modification GTPase MnmE.